The following is a 145-amino-acid chain: Basic phospholipase A2 S6-45 (145 aa).

A signal peptide spans M1–A19. Positions S20–L27 are excised as a propeptide. 7 disulfides stabilise this stretch: C38-C99, C54-C144, C56-C72, C71-C127, C78-C120, C88-C113, and C106-C118. Residues Y55, G57, and G59 each coordinate Ca(2+). Residue H75 is part of the active site. D76 is a binding site for Ca(2+). The active site involves D121.

The protein belongs to the phospholipase A2 family. Group I subfamily. D49 sub-subfamily. Requires Ca(2+) as cofactor. In terms of tissue distribution, expressed by the venom gland.

It localises to the secreted. The catalysed reaction is a 1,2-diacyl-sn-glycero-3-phosphocholine + H2O = a 1-acyl-sn-glycero-3-phosphocholine + a fatty acid + H(+). Snake venom phospholipase A2 (PLA2) that inhibits collagen-induced platelet aggregation. PLA2 catalyzes the calcium-dependent hydrolysis of the 2-acyl groups in 3-sn-phosphoglycerides. The chain is Basic phospholipase A2 S6-45 from Austrelaps superbus (Lowland copperhead snake).